A 176-amino-acid polypeptide reads, in one-letter code: NAD(P)H-quinone oxidoreductase subunit J (176 aa).

Composition is skewed to polar residues over residues 1–12 (MEKDSQATSSDT) and 20–30 (ISQSLSKDGIP). Residues 1–30 (MEKDSQATSSDTSIEKEGVISQSLSKDGIP) are disordered.

The protein belongs to the complex I 30 kDa subunit family. In terms of assembly, NDH-1 can be composed of about 15 different subunits; different subcomplexes with different compositions have been identified which probably have different functions.

It is found in the cellular thylakoid membrane. The catalysed reaction is a plastoquinone + NADH + (n+1) H(+)(in) = a plastoquinol + NAD(+) + n H(+)(out). The enzyme catalyses a plastoquinone + NADPH + (n+1) H(+)(in) = a plastoquinol + NADP(+) + n H(+)(out). NDH-1 shuttles electrons from an unknown electron donor, via FMN and iron-sulfur (Fe-S) centers, to quinones in the respiratory and/or the photosynthetic chain. The immediate electron acceptor for the enzyme in this species is believed to be plastoquinone. Couples the redox reaction to proton translocation, and thus conserves the redox energy in a proton gradient. Cyanobacterial NDH-1 also plays a role in inorganic carbon-concentration. The sequence is that of NAD(P)H-quinone oxidoreductase subunit J from Prochlorococcus marinus (strain AS9601).